The following is a 959-amino-acid chain: Probable LRR receptor-like serine/threonine-protein kinase At5g37450 (959 aa).

Positions 1–24 are cleaved as a signal peptide; the sequence is MKEMMGVVGIILVVSSCCLSLLDA. The Extracellular segment spans residues 25 to 565; it reads QEITHPTDVS…SGMSIGVSVG (541 aa). N-linked (GlcNAc...) asparagine glycosylation is found at Asn-62, Asn-88, Asn-102, and Asn-123. LRR repeat units lie at residues 79 to 100, 101 to 124, 125 to 148, 149 to 172, 173 to 198, 200 to 220, 221 to 244, 246 to 268, and 269 to 292; these read VKELRLLNMNLTGQLAPELGLL, SNLTILNFMWNDLTGQIPPELGNL, THLIFLLLSGNQLTGSLPQELGSL, SNLLILQIDYNEISGKLPTSLANL, KKLKHFHMNNNSITGQIPPEYSTLTN, LHFLMDNNKLTGNLPPELAQM, PSLRILQLDGSNFDGTEIPSSYGS, PNLVKLSLRNCNLEGPIPDLSKS, and LVLYYLDISSNKLTGEIPKNKFSA. The N-linked (GlcNAc...) asparagine glycan is linked to Asn-182. 6 N-linked (GlcNAc...) asparagine glycosylation sites follow: Asn-293, Asn-311, Asn-327, Asn-358, Asn-369, and Asn-510. LRR repeat units follow at residues 294–314, 315–338, and 341–366; these read ITTINLYNNLLSGSIPSNFSG, LPRLQRLQVQNNNLSGEIPVIWEN, and LKAEEKLILDLRNNMFSNVSSVLLNP. Residues 566-586 form a helical membrane-spanning segment; sequence IIIGAIAFFLVLSSLALVFFI. Over 587 to 959 the chain is Cytoplasmic; it reads KRSKRKRKTR…SGVIPSIAPR (373 aa). Positions 631–906 constitute a Protein kinase domain; sequence FSDLSQIGRG…RELENIYGLI (276 aa). ATP-binding positions include 637-645 and Lys-659; that span reads IGRGGYGKV. Asp-755 functions as the Proton acceptor in the catalytic mechanism.

The protein belongs to the protein kinase superfamily. Ser/Thr protein kinase family.

It localises to the membrane. It catalyses the reaction L-seryl-[protein] + ATP = O-phospho-L-seryl-[protein] + ADP + H(+). The catalysed reaction is L-threonyl-[protein] + ATP = O-phospho-L-threonyl-[protein] + ADP + H(+). The polypeptide is Probable LRR receptor-like serine/threonine-protein kinase At5g37450 (Arabidopsis thaliana (Mouse-ear cress)).